The following is a 93-amino-acid chain: MATFKKFNKDKRPKRNTQSLLFKRKRFCRFTVAGVEEIDYKDVDTLRDFIGENGKIVPARLTGTRAIYQRQLNTAIKRARFLALVPYSDQHKI.

The protein belongs to the bacterial ribosomal protein bS18 family. Part of the 30S ribosomal subunit. Forms a tight heterodimer with protein bS6.

Binds as a heterodimer with protein bS6 to the central domain of the 16S rRNA, where it helps stabilize the platform of the 30S subunit. In Delftia acidovorans (strain DSM 14801 / SPH-1), this protein is Small ribosomal subunit protein bS18.